The chain runs to 610 residues: Terminase, large subunit (610 aa).

The segment at 30–94 is ssDNA-binding; sequence RKDEDGIHWI…SRYMGLPNLK (65 aa). The interval 131-301 is ATPase activity; it reads DYGVIKVQLR…NHFYDIWTAA (171 aa). Q138 and Q143 together coordinate ATP. Residues 161 to 167 carry the Walker A motif motif; the sequence is SRQLGKT. Residue R202 participates in ATP binding. Positions 251-256 match the Walker B motif motif; the sequence is MIYIDE. E256 serves as the catalytic For ATPase activity. Positions 285–287 match the ATPase coupling motif; sequence TTT. A binding to the portal protein region spans residues 328 to 352; that stretch reads IFDDGWQWSIQTINGSSLAQFRQEH. The interval 360-559 is nuclease activity; that stretch reads SGTLISGMKL…FGWLSTQSKF (200 aa). The Mg(2+) site is built by D401, E458, and D542.

The protein belongs to the Tequatrovirus large terminase family. As to quaternary structure, interacts with the terminase small subunit; the active complex is composed of a pentamer of terminase large subunits and a dodecamer of terminase small subunits. Interacts with the portal protein. Interacts with the RNA polymerase sigma factor gp55. Mg(2+) is required as a cofactor. In terms of processing, phosphorylated.

Stimulated up to 50 to 100-fold by the terminase small subunit. Modestly activated by portal protein and single-stranded binding protein gp32 multimers. The terminase large subunit acts as an ATP driven molecular motor necessary for viral DNA translocation into empty capsids and as an endonuclease that cuts the viral genome to initiate and to end a packaging reaction. The terminase lies at a unique vertex of the procapsid and is composed of two subunits, a small terminase subunit involved in viral DNA recognition (packaging sequence), and a large terminase subunit possessing endonucleolytic and ATPase activities. Both terminase subunits heterooligomerize and are docked on the portal protein to form the packaging machine. The terminase large subunit exhibits endonuclease activity and cleaves the viral genome concatemer once the capsid is full (headful packaging). Once the capsid is packaged with the DNA, the terminase complex is substituted by the tail. This Escherichia coli (Bacteriophage T4) protein is Terminase, large subunit (17).